We begin with the raw amino-acid sequence, 411 residues long: E3 ubiquitin-protein ligase PUB23 (411 aa).

The region spanning 11–86 (EIPPFFLCPI…QSWCTLNASY (76 aa)) is the U-box domain. ARM repeat units lie at residues 132-173 (ATNK…HLET), 175-203 (ETVLKNLLNNKKDNNIVKSLTKIMQRGMY), 221-261 (DPMQ…NICP), and 263-306 (GRNR…LLCQ).

As to quaternary structure, interacts with RPN12A. In terms of processing, auto-ubiquitinated.

Its subcellular location is the cytoplasm. The enzyme catalyses S-ubiquitinyl-[E2 ubiquitin-conjugating enzyme]-L-cysteine + [acceptor protein]-L-lysine = [E2 ubiquitin-conjugating enzyme]-L-cysteine + N(6)-ubiquitinyl-[acceptor protein]-L-lysine.. Its pathway is protein modification; protein ubiquitination. In terms of biological role, E3 ubiquitin-protein ligase that negatively regulates water stress response. May control in coordination with PUB23 a drought signaling pathway by ubiquitinating cytosolic RPN12a. Acts as a negative regulator of the immunity triggered by the pathogen-associated molecular patterns (PAMPs), in association with PUB22 and PUB24. The protein is E3 ubiquitin-protein ligase PUB23 (PUB23) of Arabidopsis thaliana (Mouse-ear cress).